A 1002-amino-acid chain; its full sequence is Transposase for transposon gamma-delta (1002 aa).

It belongs to the transposase 7 family.

Its function is as follows. Required for transposition of transposon Tn1000. In Escherichia coli (strain K12), this protein is Transposase for transposon gamma-delta (tnpA).